Here is a 114-residue protein sequence, read N- to C-terminus: Acetyltransferase At1g77540 (114 aa).

The residue at position 2 (Thr2) is an N-acetylthreonine. The 89-residue stretch at 18–106 (KIVWNEGKRR…RNPSWKPLIH (89 aa)) folds into the N-acetyltransferase domain. Residues 52 to 55 (HTYV) and 61 to 66 (GLGLAS) contribute to the CoA site. The Nucleophile role is filled by Cys87. CoA contacts are provided by residues 88 to 89 (SY), Thr93, and Arg97.

It is found in the peroxisome. Functionally, possesses in vitro histone acetyltransferase activity with histones H3 and H4. In Arabidopsis thaliana (Mouse-ear cress), this protein is Acetyltransferase At1g77540.